A 387-amino-acid polypeptide reads, in one-letter code: MEDDAPVIYGLEFQARALTPQTAETDAIRFLVGTQSLKYDNQIHIIDFDDENNIINKNVLLHQAGEIWHISASPADRGVLATCYNRTSDSKVLTCAAVWRMPKELESGSHESPDDSSSTAQTLELLCHLDNTAHSNMACVVWEPMGDGKKIISLADNHILLWDLQESSSQAVLASSASLGGKGQLKFTSGRWSPHHNCTQVATANDTTLRGWDTRTMSQIYCIENAHGQLVRDLDFNPNKQYYLASCGDDCKVKFWDTRNVTEPVKTLEEHSHWVWNVRYNHSHDQLVLTGSSDSRVILSNMVSISSEPFGHLVDDDDISDQEDHRSEEKSKEPLQDNVIATYEEHEDSVYAVDWSSADPWLFASLSYDGRLVINRVPRALKYHILL.

N-acetylmethionine is present on M1. WD repeat units follow at residues 132–172, 180–222, 226–266, and 270–310; these read TAHS…SQAV, GGKG…QIYC, AHGQ…EPVK, and EHSH…SEPF. Positions 310 to 334 are disordered; that stretch reads FGHLVDDDDISDQEDHRSEEKSKEP. A Phosphoserine modification is found at S320. Basic and acidic residues predominate over residues 322 to 334; the sequence is QEDHRSEEKSKEP. Residues 345–385 form a WD 5 repeat; sequence EHEDSVYAVDWSSADPWLFASLSYDGRLVINRVPRALKYHI.

This sequence belongs to the WD repeat EIPR1 family. Interacts with two multisubunit tethering complexes: EARP composed of VPS50, VPS51, VPS52 and VPS53 subunits and GARP complex composed of VPS51, VPS52, VPS53 and VPS54 subunits. Interacts with SNAP29.

The protein resides in the golgi apparatus. It is found in the trans-Golgi network. Acts as a component of endosomal retrieval machinery that is involved in protein transport from early endosomes to either recycling endosomes or the trans-Golgi network. Mediates the recruitment of Golgi-associated retrograde protein (GARP) complex to the trans-Golgi network and controls early endosome-to-Golgi transport of internalized protein. Promotes the recycling of internalized transferrin receptor (TFRC) to the plasma membrane through interaction with endosome-associated recycling protein (EARP) complex. Controls proper insulin distribution and secretion, and retention of cargo in mature dense core vesicles. Required for the stability of the endosome-associated retrograde protein (EARP) complex subunits and for proper localization and association of EARP with membranes. The polypeptide is EARP and GARP complex-interacting protein 1 (Macaca fascicularis (Crab-eating macaque)).